We begin with the raw amino-acid sequence, 429 residues long: Bifunctional phosphoribosylaminoimidazole carboxylase/phosphoribosylaminoimidazole succinocarboxamide synthetase (429 aa).

Residues alanine 7–valine 264 form an SAICAR synthetase region. Residues alanine 7–valine 264 form an SAICAR synthetase domain region. The interval proline 265 to alanine 429 is AIR carboxylase. The tract at residues leucine 270–alanine 429 is AIR carboxylase domain. Serine 335 is a binding site for CO2.

This sequence in the N-terminal section; belongs to the SAICAR synthetase family. The protein in the C-terminal section; belongs to the AIR carboxylase family. Class II subfamily. Homooctamer.

It catalyses the reaction 5-amino-1-(5-phospho-D-ribosyl)imidazole-4-carboxylate + L-aspartate + ATP = (2S)-2-[5-amino-1-(5-phospho-beta-D-ribosyl)imidazole-4-carboxamido]succinate + ADP + phosphate + 2 H(+). It carries out the reaction 5-amino-1-(5-phospho-D-ribosyl)imidazole-4-carboxylate + H(+) = 5-amino-1-(5-phospho-beta-D-ribosyl)imidazole + CO2. It participates in purine metabolism; IMP biosynthesis via de novo pathway; 5-amino-1-(5-phospho-D-ribosyl)imidazole-4-carboxamide from 5-amino-1-(5-phospho-D-ribosyl)imidazole-4-carboxylate: step 1/2. It functions in the pathway purine metabolism; IMP biosynthesis via de novo pathway; 5-amino-1-(5-phospho-D-ribosyl)imidazole-4-carboxylate from 5-amino-1-(5-phospho-D-ribosyl)imidazole (carboxylase route): step 1/1. Its function is as follows. Bifunctional phosphoribosylaminoimidazole carboxylase and phosphoribosylaminoimidazole succinocarboxamide synthetase catalyzing two reactions of the de novo purine biosynthetic pathway. The chain is Bifunctional phosphoribosylaminoimidazole carboxylase/phosphoribosylaminoimidazole succinocarboxamide synthetase from Drosophila melanogaster (Fruit fly).